A 377-amino-acid polypeptide reads, in one-letter code: Guanine nucleotide-binding protein subunit alpha-13 (377 aa).

S-palmitoyl cysteine attachment occurs at residues C14 and C18. One can recognise a G-alpha domain in the interval 47–377; the sequence is RLVKILLLGA…HDNLKQLMLQ (331 aa). Positions 50–63 are G1 motif; it reads KILLLGAGESGKST. Residues 58-63, S173, and 197-200 each bind GTP; these read ESGKST and LLAR. Position 62 (S62) interacts with Mg(2+). The tract at residues 195 to 203 is G2 motif; sequence DILLARRPT. Position 203 (T203) interacts with Mg(2+). T203 is subject to Phosphothreonine; by PKA. The tract at residues 218-227 is G3 motif; sequence FKMVDVGGQR. The G4 motif stretch occupies residues 287 to 294; it reads ILFLNKTD. GTP-binding positions include 291-294 and A349; that span reads NKTD. The tract at residues 347 to 352 is G5 motif; sequence TTAINT.

This sequence belongs to the G-alpha family. G(12) subfamily. In terms of assembly, g proteins are composed of 3 units; alpha, beta and gamma. The alpha chain contains the guanine nucleotide binding site. Interacts with UBXD5. Interacts with HAX1. Interacts (in GTP-bound form) with PPP5C (via TPR repeats); activates PPP5C phosphatase activity and translocates PPP5C to the cell membrane. Interacts with RGS22. Interacts with ARHGEF1. Interacts (in GTP-bound form) with ARHGEF11 (via RGS domain). Interacts (in GTP-bound form) with ARHGEF12 (via RGS domain). Interacts (in GTP-bound form) with CTNND1. Interacts with GAS2L2. Interacts with GPR35. Interacts with GPR174. Post-translationally, palmitoylation is critical for proper membrane localization and signaling. Phosphorylation on Thr-203 by PKA destabilizes the heterotrimer of alpha, beta and gamma, and inhibits Rho activation.

The protein localises to the membrane. It is found in the melanosome. The protein resides in the cytoplasm. Its subcellular location is the nucleus. Functionally, guanine nucleotide-binding proteins (G proteins) are involved as modulators or transducers in various transmembrane signaling systems. Activates effector molecule RhoA by binding and activating RhoGEFs (ARHGEF1/p115RhoGEF, ARHGEF11/PDZ-RhoGEF and ARHGEF12/LARG). GNA13-dependent Rho signaling subsequently regulates transcription factor AP-1 (activating protein-1). Promotes tumor cell invasion and metastasis by activating RhoA/ROCK signaling pathway. Inhibits CDH1-mediated cell adhesion in process independent from Rho activation. In lymphoid follicles, transmits P2RY8- and S1PR2-dependent signals that lead to inhibition of germinal center (GC) B cell growth and migration outside the GC niche. The protein is Guanine nucleotide-binding protein subunit alpha-13 (Gna13) of Rattus norvegicus (Rat).